A 449-amino-acid chain; its full sequence is Adenylyltransferase and sulfurtransferase MOCS3 (449 aa).

ATP contacts are provided by residues Gly-96, Asp-117, 124 to 128, Lys-141, and 185 to 186; these read SNLHR and DN. Zn(2+)-binding residues include Cys-227 and Cys-230. Cys-244 (glycyl thioester intermediate; for adenylyltransferase activity) is an active-site residue. Zn(2+)-binding residues include Cys-302 and Cys-305. Residues 351–447 form the Rhodanese domain; it reads QDKPHLLLDV…WTNQIDENFP (97 aa). Catalysis depends on Cys-406, which acts as the Cysteine persulfide intermediate; for sulfurtransferase activity.

This sequence in the N-terminal section; belongs to the HesA/MoeB/ThiF family. UBA4 subfamily. Requires Zn(2+) as cofactor.

The protein localises to the cytoplasm. It is found in the cytosol. The enzyme catalyses [molybdopterin-synthase sulfur-carrier protein]-C-terminal Gly-Gly + ATP + H(+) = [molybdopterin-synthase sulfur-carrier protein]-C-terminal Gly-Gly-AMP + diphosphate. It carries out the reaction [molybdopterin-synthase sulfur-carrier protein]-C-terminal Gly-Gly-AMP + S-sulfanyl-L-cysteinyl-[cysteine desulfurase] + AH2 = [molybdopterin-synthase sulfur-carrier protein]-C-terminal-Gly-aminoethanethioate + L-cysteinyl-[cysteine desulfurase] + A + AMP + 2 H(+). The protein operates within tRNA modification; 5-methoxycarbonylmethyl-2-thiouridine-tRNA biosynthesis. Its pathway is cofactor biosynthesis; molybdopterin biosynthesis. Its function is as follows. Plays a central role in 2-thiolation of mcm(5)S(2)U at tRNA wobble positions of cytosolic tRNA(Lys), tRNA(Glu) and tRNA(Gln). Also essential during biosynthesis of the molybdenum cofactor. Acts by mediating the C-terminal thiocarboxylation of sulfur carriers URM1 and MOCS2A. Its N-terminus first activates URM1 and MOCS2A as acyl-adenylates (-COAMP), then the persulfide sulfur on the catalytic cysteine is transferred to URM1 and MOCS2A to form thiocarboxylation (-COSH) of their C-terminus. The reaction probably involves hydrogen sulfide that is generated from the persulfide intermediate and that acts as a nucleophile towards URM1 and MOCS2A. Subsequently, a transient disulfide bond is formed. Does not use thiosulfate as sulfur donor; NFS1 probably acting as a sulfur donor for thiocarboxylation reactions. The protein is Adenylyltransferase and sulfurtransferase MOCS3 of Drosophila grimshawi (Hawaiian fruit fly).